Reading from the N-terminus, the 136-residue chain is MRHKIKGRKLNVTSSHRQAMLANMAVALVTHEQIKTTLPKAKELRPYIETLITKAKKADLMVRRSVLSKIKDKTAVEKLINILGTRYKDRPGGYTRIIKAGFRYGDLAPIAYIEFVDRDINAKGNIQQDANEEIKN.

It belongs to the bacterial ribosomal protein bL17 family. As to quaternary structure, part of the 50S ribosomal subunit. Contacts protein L32.

This chain is Large ribosomal subunit protein bL17, found in Rickettsia peacockii (strain Rustic).